Reading from the N-terminus, the 1206-residue chain is DNA-directed RNA polymerase subunit beta' (1206 aa).

The Zn(2+) site is built by cysteine 60, cysteine 62, cysteine 75, and cysteine 78. Mg(2+) is bound by residues aspartate 449, aspartate 451, and aspartate 453. Zn(2+)-binding residues include cysteine 818, cysteine 892, cysteine 899, and cysteine 902.

It belongs to the RNA polymerase beta' chain family. The RNAP catalytic core consists of 2 alpha, 1 beta, 1 beta' and 1 omega subunit. When a sigma factor is associated with the core the holoenzyme is formed, which can initiate transcription. It depends on Mg(2+) as a cofactor. Zn(2+) is required as a cofactor.

It catalyses the reaction RNA(n) + a ribonucleoside 5'-triphosphate = RNA(n+1) + diphosphate. DNA-dependent RNA polymerase catalyzes the transcription of DNA into RNA using the four ribonucleoside triphosphates as substrates. The protein is DNA-directed RNA polymerase subunit beta' of Shouchella clausii (strain KSM-K16) (Alkalihalobacillus clausii).